A 311-amino-acid chain; its full sequence is Methionyl-tRNA formyltransferase (311 aa).

Residue 110–113 (SLLP) coordinates (6S)-5,6,7,8-tetrahydrofolate.

The protein belongs to the Fmt family.

It catalyses the reaction L-methionyl-tRNA(fMet) + (6R)-10-formyltetrahydrofolate = N-formyl-L-methionyl-tRNA(fMet) + (6S)-5,6,7,8-tetrahydrofolate + H(+). Attaches a formyl group to the free amino group of methionyl-tRNA(fMet). The formyl group appears to play a dual role in the initiator identity of N-formylmethionyl-tRNA by promoting its recognition by IF2 and preventing the misappropriation of this tRNA by the elongation apparatus. This is Methionyl-tRNA formyltransferase from Streptococcus pyogenes serotype M6 (strain ATCC BAA-946 / MGAS10394).